The primary structure comprises 201 residues: Casparian strip membrane protein 7 (201 aa).

The span at 1–11 (MEAGEEIEDGE) shows a compositional bias: acidic residues. The interval 1 to 26 (MEAGEEIEDGEPSTPTYKAHHPPPHL) is disordered. The Cytoplasmic segment spans residues 1–34 (MEAGEEIEDGEPSTPTYKAHHPPPHLPPPMRSSG). Residues 35 to 55 (VSLVLSVADLVLRFVAIGGTA) traverse the membrane as a helical segment. Topologically, residues 56–86 (GSAIAMATTSETLPFAAPFVRFRAEYSDLPT) are extracellular. Residues 87-107 (LMFFVVASSVVCAYLVLSLPA) traverse the membrane as a helical segment. Over 108-128 (SVVHVVRPGARSSRAILAFLD) the chain is Cytoplasmic. A helical membrane pass occupies residues 129 to 149 (TVMLALLTASASAAAAIVYLA). At 150 to 171 (HRGSARANWLGICQQFTSFCQR) the chain is on the extracellular side. Residues 172–192 (ITASLVGSFAAAVVLVALVFL) traverse the membrane as a helical segment. Topologically, residues 193 to 201 (SALSLARRA) are cytoplasmic.

The protein belongs to the Casparian strip membrane proteins (CASP) family. As to quaternary structure, homodimer and heterodimers.

It is found in the cell membrane. Its function is as follows. Regulates membrane-cell wall junctions and localized cell wall deposition. Required for establishment of the Casparian strip membrane domain (CSD) and the subsequent formation of Casparian strips, a cell wall modification of the root endodermis that determines an apoplastic barrier between the intraorganismal apoplasm and the extraorganismal apoplasm and prevents lateral diffusion. The sequence is that of Casparian strip membrane protein 7 from Oryza sativa subsp. japonica (Rice).